The primary structure comprises 111 residues: Iron-sulfur cluster insertion protein ErpA (111 aa).

Iron-sulfur cluster-binding residues include Cys-39, Cys-103, and Cys-105.

The protein belongs to the HesB/IscA family. Homodimer. The cofactor is iron-sulfur cluster.

Required for insertion of 4Fe-4S clusters for at least IspG. This is Iron-sulfur cluster insertion protein ErpA from Acinetobacter baumannii (strain AB307-0294).